A 357-amino-acid polypeptide reads, in one-letter code: Cinnamyl alcohol dehydrogenase 7 (357 aa).

Position 46 (Cys46) interacts with Zn(2+). Residue Thr48 participates in NADP(+) binding. Zn(2+) contacts are provided by His68, Glu69, Cys99, Cys102, Cys105, Cys113, and Cys162. NADP(+) is bound by residues Thr166, Gly187–Gly192, Ser210–Lys215, Thr250, Gly274, and Ser297–Val299.

It belongs to the zinc-containing alcohol dehydrogenase family. As to quaternary structure, homodimer. It depends on Zn(2+) as a cofactor. As to expression, expressed in the differentiation and elongation zones of primary and lateral roots. Expressed in the hypocotyl, cotyledon and leaf veins, hydathodes and trichomes. In stems, expressed in the vascular cambium region. Expressed in the style, anthers, stamen filaments, vascular tissues of sepals and stigmatic regions in flowers, and abscission, style and stigmatic regions of siliques and seed testa.

It catalyses the reaction (E)-cinnamyl alcohol + NADP(+) = (E)-cinnamaldehyde + NADPH + H(+). It participates in aromatic compound metabolism; phenylpropanoid biosynthesis. Functionally, involved in lignin biosynthesis. Catalyzes the final step specific for the production of lignin monomers. Catalyzes the NADPH-dependent reduction of coniferaldehyde, 5-hydroxyconiferaldehyde, sinapaldehyde, 4-coumaraldehyde and caffeyl aldehyde to their respective alcohols. This Arabidopsis thaliana (Mouse-ear cress) protein is Cinnamyl alcohol dehydrogenase 7 (CAD7).